The following is a 122-amino-acid chain: Large ribosomal subunit protein uL14 (122 aa).

This sequence belongs to the universal ribosomal protein uL14 family. In terms of assembly, part of the 50S ribosomal subunit. Forms a cluster with proteins L3 and L19. In the 70S ribosome, L14 and L19 interact and together make contacts with the 16S rRNA in bridges B5 and B8.

Functionally, binds to 23S rRNA. Forms part of two intersubunit bridges in the 70S ribosome. The sequence is that of Large ribosomal subunit protein uL14 from Xanthomonas axonopodis pv. citri (strain 306).